The following is an 84-amino-acid chain: Antitoxin VapB30 (84 aa).

In terms of biological role, antitoxin component of a type II toxin-antitoxin (TA) system. Upon expression in M.smegmatis neutralizes the effect of cognate toxin VapC30. The sequence is that of Antitoxin VapB30 (vapB30) from Mycobacterium tuberculosis (strain ATCC 25618 / H37Rv).